The following is a 371-amino-acid chain: Cytochrome b (371 aa).

4 helical membrane-spanning segments follow: residues 25–45 (FGSM…FLAV), 69–90 (WIMQ…YIHI), 105–125 (WLSG…GYVL), and 170–190 (FFAL…IHII). Residues histidine 75 and histidine 89 each coordinate heme b. Histidine 174 and histidine 188 together coordinate heme b. Residue histidine 193 coordinates a ubiquinone. The next 4 membrane-spanning stretches (helical) occupy residues 218–238 (YKDM…LSFM), 280–300 (LGGT…PFTH), 312–332 (LTQA…WTAT), and 339–358 (FTLI…IINP).

This sequence belongs to the cytochrome b family. The cytochrome bc1 complex contains 3 respiratory subunits (MT-CYB, CYC1 and UQCRFS1), 2 core proteins (UQCRC1 and UQCRC2) and probably 6 low-molecular weight proteins. Requires heme b as cofactor.

The protein resides in the mitochondrion inner membrane. Functionally, component of the ubiquinol-cytochrome c reductase complex (complex III or cytochrome b-c1 complex) that is part of the mitochondrial respiratory chain. The b-c1 complex mediates electron transfer from ubiquinol to cytochrome c. Contributes to the generation of a proton gradient across the mitochondrial membrane that is then used for ATP synthesis. In Toxicocalamus preussi (Preuss's forest snake), this protein is Cytochrome b (MT-CYB).